Reading from the N-terminus, the 306-residue chain is Elongation factor Ts (306 aa).

The involved in Mg(2+) ion dislocation from EF-Tu stretch occupies residues 81–84 (TDFV).

It belongs to the EF-Ts family.

The protein localises to the cytoplasm. In terms of biological role, associates with the EF-Tu.GDP complex and induces the exchange of GDP to GTP. It remains bound to the aminoacyl-tRNA.EF-Tu.GTP complex up to the GTP hydrolysis stage on the ribosome. This Polaromonas naphthalenivorans (strain CJ2) protein is Elongation factor Ts.